A 349-amino-acid polypeptide reads, in one-letter code: Isopentenyl-diphosphate delta-isomerase (349 aa).

12–13 (RK) is a binding site for substrate. FMN is bound by residues Ser69, 70-72 (SMT), Ser101, and Asn129. 101-103 (SQR) lines the substrate pocket. Position 164 (Gln164) interacts with substrate. Mg(2+) is bound at residue Glu165. Residues Lys196, Thr226, 279–281 (GIR), and 300–301 (AA) contribute to the FMN site.

It belongs to the IPP isomerase type 2 family. As to quaternary structure, homooctamer. Dimer of tetramers. The cofactor is FMN. NADPH is required as a cofactor. It depends on Mg(2+) as a cofactor.

Its subcellular location is the cytoplasm. It catalyses the reaction isopentenyl diphosphate = dimethylallyl diphosphate. Involved in the biosynthesis of isoprenoids. Catalyzes the 1,3-allylic rearrangement of the homoallylic substrate isopentenyl (IPP) to its allylic isomer, dimethylallyl diphosphate (DMAPP). The sequence is that of Isopentenyl-diphosphate delta-isomerase from Paracoccus zeaxanthinifaciens.